A 229-amino-acid chain; its full sequence is Large ribosomal subunit protein uL3 (229 aa).

The residue at position 151 (Gln151) is an N5-methylglutamine.

The protein belongs to the universal ribosomal protein uL3 family. As to quaternary structure, part of the 50S ribosomal subunit. Forms a cluster with proteins L14 and L19. Methylated by PrmB.

Its function is as follows. One of the primary rRNA binding proteins, it binds directly near the 3'-end of the 23S rRNA, where it nucleates assembly of the 50S subunit. This Paramagnetospirillum magneticum (strain ATCC 700264 / AMB-1) (Magnetospirillum magneticum) protein is Large ribosomal subunit protein uL3.